A 354-amino-acid chain; its full sequence is Ubiquinol oxidase 1a, mitochondrial (354 aa).

The N-terminal 62 residues, 1–62 (MMITRGGAKA…RAPTIGGMRF (62 aa)), are a transit peptide targeting the mitochondrion. The interval 68-99 (LGEKTPMKEEDANQKKTENESTGGDAAGGNNK) is disordered. Over residues 72-86 (TPMKEEDANQKKTEN) the composition is skewed to basic and acidic residues. Residues 179–199 (AMMLETVAAVPGMVGGMLLHC) traverse the membrane as a helical segment. Positions 183, 222, and 225 each coordinate Fe cation. Residues 241 to 261 (ALVITVQGVFFNAYFLGYLIS) form a helical membrane-spanning segment. Residues Glu-273, Glu-324, and His-327 each contribute to the Fe cation site.

It belongs to the alternative oxidase family. As to quaternary structure, homodimer; disulfide-linked. Fe cation serves as cofactor. In terms of tissue distribution, expressed in roots, stems, cotyledons, leaves and flowers. High expression in sepals.

The protein localises to the mitochondrion inner membrane. The enzyme catalyses 2 a ubiquinol + O2 = 2 a ubiquinone + 2 H2O. Its activity is regulated as follows. When the two monomeric subunits are covalently linked by a S-S bond, the enzyme is essentially inactive. When the disulfide bond is reduced, its component sulfhydryls can associate with K-keto acids through formation of a thiohemiacetal, resulting in enzyme activation. Activated by glyoxylate, irrespective to the substitution found at Cys-127. That suggests the presence of a second activation site, possibly Cys-177. In terms of biological role, catalyzes the cyanide-resistant oxidation of ubiquinol and the reduction of molecular oxygen to water, but does not translocate protons and consequently is not linked to oxidative phosphorylation. Increases respiration when the cytochrome respiratory pathway is restricted, or in response to low temperatures. The sequence is that of Ubiquinol oxidase 1a, mitochondrial (AOX1A) from Arabidopsis thaliana (Mouse-ear cress).